The following is a 334-amino-acid chain: E3 ubiquitin-protein ligase CIP8 (334 aa).

Residues 111–158 (LNSRNEIDDDEDEDEDDGDEEEEDEEENLTVNDEEDEEDDLRRRNRFP) form a disordered region. The span at 117–149 (IDDDEDEDEDDGDEEEEDEEENLTVNDEEDEED) shows a compositional bias: acidic residues. An RING-type; atypical zinc finger spans residues 257 to 298 (CAVCKDGMVMGETGKKLPCGHCYHGDCIVPWLGTRNSCPVCR). Residues 307-334 (EYEEERKKRTSTVSDSAAASSSSSTSRY) are disordered. The segment covering 317–334 (STVSDSAAASSSSSTSRY) has biased composition (low complexity).

Interacts with the RING finger of COP1. Interacts with UBC8 through its N-terminal region. In terms of tissue distribution, expressed in both light- and dark-grown seedlings.

It localises to the cytoplasm. It carries out the reaction S-ubiquitinyl-[E2 ubiquitin-conjugating enzyme]-L-cysteine + [acceptor protein]-L-lysine = [E2 ubiquitin-conjugating enzyme]-L-cysteine + N(6)-ubiquitinyl-[acceptor protein]-L-lysine.. The protein operates within protein modification; protein ubiquitination. Functionally, E3 ubiquitin-protein ligase that mediates ubiquitination and subsequent proteasomal degradation of target proteins. Probably forms a minimal ubiquitin ligase complex in cooperation with the E2 enzyme UBC8. Its interaction with COP1 suggests that it may participate in proteasome-mediated degradation of HY5 in vivo. This chain is E3 ubiquitin-protein ligase CIP8 (CIP8), found in Arabidopsis thaliana (Mouse-ear cress).